We begin with the raw amino-acid sequence, 55 residues long: Seripauperin-7 (55 aa).

The first 20 residues, 1–20 (MVKLTSIAAGVAAIAAGASA), serve as a signal peptide directing secretion.

The protein belongs to the SRP1/TIP1 family. Seripauperin subfamily.

The polypeptide is Seripauperin-7 (PAU7) (Saccharomyces cerevisiae (strain ATCC 204508 / S288c) (Baker's yeast)).